The chain runs to 240 residues: MSLDMKEHPDAEVQKNRVLTLEDWKDKWVTRHISFHQEQGHQLLKKHLDTFLKGQSGLRVFFPLCGKAVEMKWFADRGHTVVGVEISEIGIREFFAEQNLSYTEEPLAEIAGAKVFKSSSGSISLYCCSIFDLPRANIGKFDRIWDRGALVAINPGDHDRYADIILSLLRKEFQYLMAVLSYDPTKHAGPPFYVPSAELKRLFGTKCSMQCLEEVDALEERHKAWGLDYLFEKLYLLTEK.

24–35 provides a ligand contact to S-adenosyl-L-methionine; the sequence is WKDKWVTRHISF. Position 35 (phenylalanine 35) interacts with substrate. Lysine 53 is modified (N6-acetyllysine). S-adenosyl-L-methionine is bound by residues leucine 64, glutamate 85, 129–130, and arginine 147; that span reads SI.

Belongs to the class I-like SAM-binding methyltransferase superfamily. TPMT family. In terms of assembly, monomer.

It is found in the cytoplasm. It catalyses the reaction S-adenosyl-L-methionine + a thiopurine = S-adenosyl-L-homocysteine + a thiopurine S-methylether.. It carries out the reaction mercaptopurine + S-adenosyl-L-methionine = 6-methylthiopurine + S-adenosyl-L-homocysteine + H(+). Its function is as follows. Catalyzes the S-methylation of thiopurine drugs such as 6-mercaptopurine (also called mercaptopurine, 6-MP or its brand name Purinethol) using S-adenosyl-L-methionine as the methyl donor. TPMT activity modulates the cytotoxic effects of thiopurine prodrugs. A natural substrate for this enzyme has yet to be identified. In Mus spretus (Western Mediterranean mouse), this protein is Thiopurine S-methyltransferase (Tpmt).